Reading from the N-terminus, the 1383-residue chain is DNA-directed RNA polymerase subunit beta'' (1383 aa).

4 residues coordinate Zn(2+): Cys220, Cys289, Cys296, and Cys299.

It belongs to the RNA polymerase beta' chain family. RpoC2 subfamily. As to quaternary structure, in plastids the minimal PEP RNA polymerase catalytic core is composed of four subunits: alpha, beta, beta', and beta''. When a (nuclear-encoded) sigma factor is associated with the core the holoenzyme is formed, which can initiate transcription. Zn(2+) serves as cofactor.

The protein resides in the plastid. It localises to the chloroplast. It catalyses the reaction RNA(n) + a ribonucleoside 5'-triphosphate = RNA(n+1) + diphosphate. In terms of biological role, DNA-dependent RNA polymerase catalyzes the transcription of DNA into RNA using the four ribonucleoside triphosphates as substrates. This Oenothera biennis (German evening primrose) protein is DNA-directed RNA polymerase subunit beta''.